The sequence spans 81 residues: Putative membrane protein insertion efficiency factor 1 (81 aa).

This sequence belongs to the UPF0161 family.

The protein resides in the cell membrane. Functionally, could be involved in insertion of integral membrane proteins into the membrane. In Bacillus licheniformis (strain ATCC 14580 / DSM 13 / JCM 2505 / CCUG 7422 / NBRC 12200 / NCIMB 9375 / NCTC 10341 / NRRL NRS-1264 / Gibson 46), this protein is Putative membrane protein insertion efficiency factor 1.